A 217-amino-acid chain; its full sequence is Ribosomal RNA small subunit methyltransferase G (217 aa).

S-adenosyl-L-methionine is bound by residues glycine 74, leucine 79, 125–126 (IQ), and arginine 143.

This sequence belongs to the methyltransferase superfamily. RNA methyltransferase RsmG family.

The protein localises to the cytoplasm. It carries out the reaction guanosine(527) in 16S rRNA + S-adenosyl-L-methionine = N(7)-methylguanosine(527) in 16S rRNA + S-adenosyl-L-homocysteine. Its function is as follows. Specifically methylates the N7 position of guanine in position 527 of 16S rRNA. This chain is Ribosomal RNA small subunit methyltransferase G, found in Syntrophotalea carbinolica (strain DSM 2380 / NBRC 103641 / GraBd1) (Pelobacter carbinolicus).